A 512-amino-acid polypeptide reads, in one-letter code: D-alanine--D-alanyl carrier protein ligase (512 aa).

152–153 (TS) is a binding site for ATP. Asp-199 is a D-alanine binding site. 294-299 (NAYGPT) serves as a coordination point for ATP. Residue Val-303 participates in D-alanine binding. ATP-binding positions include Asp-385, 397-400 (YGGR), and Lys-499. Residue Lys-499 coordinates D-alanine.

The protein belongs to the ATP-dependent AMP-binding enzyme family. DltA subfamily.

It is found in the cytoplasm. The catalysed reaction is holo-[D-alanyl-carrier protein] + D-alanine + ATP = D-alanyl-[D-alanyl-carrier protein] + AMP + diphosphate. It functions in the pathway cell wall biogenesis; lipoteichoic acid biosynthesis. In terms of biological role, catalyzes the first step in the D-alanylation of lipoteichoic acid (LTA), the activation of D-alanine and its transfer onto the D-alanyl carrier protein (Dcp) DltC. In an ATP-dependent two-step reaction, forms a high energy D-alanyl-AMP intermediate, followed by transfer of the D-alanyl residue as a thiol ester to the phosphopantheinyl prosthetic group of the Dcp. D-alanylation of LTA plays an important role in modulating the properties of the cell wall in Gram-positive bacteria, influencing the net charge of the cell wall. The polypeptide is D-alanine--D-alanyl carrier protein ligase (Streptococcus pyogenes serotype M1).